We begin with the raw amino-acid sequence, 145 residues long: Putative pre-16S rRNA nuclease (145 aa).

The protein belongs to the YqgF nuclease family.

The protein localises to the cytoplasm. In terms of biological role, could be a nuclease involved in processing of the 5'-end of pre-16S rRNA. The protein is Putative pre-16S rRNA nuclease of Pseudomonas fluorescens (strain ATCC BAA-477 / NRRL B-23932 / Pf-5).